A 507-amino-acid chain; its full sequence is ATP synthase subunit alpha, chloroplastic (507 aa).

An ATP-binding site is contributed by 170–177 (GDRQTGKT).

This sequence belongs to the ATPase alpha/beta chains family. As to quaternary structure, F-type ATPases have 2 components, CF(1) - the catalytic core - and CF(0) - the membrane proton channel. CF(1) has five subunits: alpha(3), beta(3), gamma(1), delta(1), epsilon(1). CF(0) has four main subunits: a, b, b' and c.

Its subcellular location is the plastid. It is found in the chloroplast thylakoid membrane. It catalyses the reaction ATP + H2O + 4 H(+)(in) = ADP + phosphate + 5 H(+)(out). Functionally, produces ATP from ADP in the presence of a proton gradient across the membrane. The alpha chain is a regulatory subunit. This chain is ATP synthase subunit alpha, chloroplastic, found in Ranunculus macranthus (Large buttercup).